A 1676-amino-acid polypeptide reads, in one-letter code: DNA-directed RNA polymerase subunit beta'-beta'' (1676 aa).

The segment at 1 to 582 (MCDAIQIRLA…FLKTTPGRII (582 aa)) is DNA-directed RNA polymerase subunit beta'. The Zn(2+) site is built by C64, C66, C79, and C82. Mg(2+)-binding residues include D454, D456, and D458. Positions 583–1676 (FYQQAAYHVG…IPAGTGAKYL (1094 aa)) are DNA-directed RNA polymerase subunit beta''. C804, C859, C866, and C869 together coordinate Zn(2+).

It in the N-terminal section; belongs to the RNA polymerase beta' chain family. RpoC1 subfamily. This sequence in the C-terminal section; belongs to the RNA polymerase beta' chain family. RpoC2 subfamily. In plastids the minimal PEP RNA polymerase catalytic core is composed of four subunits: alpha, beta, beta', and beta''. When a (nuclear-encoded) sigma factor is associated with the core the holoenzyme is formed, which can initiate transcription. Beta' and beta'' are fused in this algae. Mg(2+) serves as cofactor. Zn(2+) is required as a cofactor.

The protein localises to the plastid. Its subcellular location is the chloroplast. The enzyme catalyses RNA(n) + a ribonucleoside 5'-triphosphate = RNA(n+1) + diphosphate. Its function is as follows. DNA-dependent RNA polymerase catalyzes the transcription of DNA into RNA using the four ribonucleoside triphosphates as substrates. This Cyanidioschyzon merolae (strain NIES-3377 / 10D) (Unicellular red alga) protein is DNA-directed RNA polymerase subunit beta'-beta''.